The chain runs to 2254 residues: Genome polyprotein (2254 aa).

The SF3 helicase domain occupies 438–592 (QTTINELAQL…EQWLVDNPGR (155 aa)). 464–471 (GPPGIGKT) contacts ATP. The residue at position 956 (tyrosine 956) is an O-(5'-phospho-RNA)-tyrosine. The region spanning 1041–1196 (GDTYDSEGRG…KKLVSRVQTK (156 aa)) is the Peptidase C24 domain. Catalysis depends on for 3CLpro activity residues histidine 1078, aspartate 1099, and cysteine 1163. In terms of domain architecture, RdRp catalytic spans 1434–1559 (RVLYCLDYSK…GLTPATASIM (126 aa)). The disordered stretch occupies residues 1714–1742 (PAPTRSVASNPEGTQNSNESRPVQPAGPM). Over residues 1719 to 1734 (SVASNPEGTQNSNESR) the composition is skewed to polar residues.

As to quaternary structure, homodimer. Homomultimer. Interacts with host IEF4E; this interaction plays a role in translation of viral proteins. Post-translationally, specific enzymatic cleavages in vivo yield mature proteins. Pro-Pol is first autocatalytically cleaved, then processes the whole polyprotein. In terms of processing, VPg is uridylylated by the polymerase and is covalently attached to the 5'-end of the polyadenylated genomic and subgenomic RNAs. This uridylylated form acts as a nucleotide-peptide primer for the polymerase.

The protein localises to the virion. It is found in the host cytoplasm. The catalysed reaction is a ribonucleoside 5'-triphosphate + H2O = a ribonucleoside 5'-diphosphate + phosphate + H(+). It catalyses the reaction RNA(n) + a ribonucleoside 5'-triphosphate = RNA(n+1) + diphosphate. It carries out the reaction Endopeptidase with a preference for cleavage when the P1 position is occupied by Glu-|-Xaa and the P1' position is occupied by Gly-|-Yaa.. Together with NTPase and NS4, initiates the formation of the replication complex. Induces the proliferation of the host smooth ER membranes forming long tubular structures. These remodeled membranes probably form the viral factories that contain the replication complex. Its function is as follows. Displays NTPase activity, but no helicase activity. Induces the formation of convoluted membranes derived from the host ER. These remodeled membranes probably form the viral factories that contain the replication complex. Together with NS2 and NS4, initiates the formation of the replication complex. Functionally, probable key protein responsible for the formation of membrane alterations by the virus. Induces the formation of convoluted membranes derived from the host ER. These remodeled membranes probably form the viral factories that contain the replication complex. Together with NS2 and NTPase, initiates the formation of the replication complex. In terms of biological role, viral genome-linked protein is covalently linked to the 5'-end of the positive-strand, negative-strand genomic RNAs and subgenomic RNA. Acts as a genome-linked replication primer. May recruit ribosome to viral RNA thereby promoting viral proteins translation. Interacts with host translation initiation complex to allow the translation of viral proteins. Protease-polymerase p76 processes the polyprotein: Pro-Pol is first released by autocleavage, then all other proteins are cleaved. Cleaves host translation initiation factor eIF4G1, eIF4G2 and PABP1 thereby inducing a shutdown of host protein synthesis. This shutdown may not prevent viral mRNA from being translated since viral Vpg replaces the cap. It is also an RNA-directed RNA polymerase which replicates genomic and antigenomic viral RNA by recognizing specific signals. Also transcribes a subgenomic mRNA by initiating RNA synthesis internally on antigenomic RNA. This sgRNA codes for structural proteins. Catalyzes the covalent attachment VPg with viral RNAs. Its function is as follows. Capsid protein self assembles to form an icosahedral capsid with a T=3 symmetry, about 38 nm in diameter, and consisting of 180 capsid proteins. The capsid encapsulate the genomic RNA and VP2 proteins. Attaches virion to target cells, inducing endocytosis of the viral particle. Acidification of the endosome induces conformational change of capsid protein thereby injecting virus genomic RNA into host cytoplasm. This Porcine enteric sapovirus (isolate Swine/United States/Cowden/1980) (Sw/SV/Cowden/1980/US) protein is Genome polyprotein.